The sequence spans 30 residues: Urease subunit alpha (30 aa).

It belongs to the metallo-dependent hydrolases superfamily. Urease alpha subunit family. Heterotrimer of UreA (gamma), UreB (beta) and UreC (alpha) subunits. Three heterotrimers associate to form the active enzyme. Requires Ni cation as cofactor.

The protein localises to the cytoplasm. It carries out the reaction urea + 2 H2O + H(+) = hydrogencarbonate + 2 NH4(+). It functions in the pathway nitrogen metabolism; urea degradation; CO(2) and NH(3) from urea (urease route): step 1/1. This is Urease subunit alpha (ureC) from Escherichia coli.